The following is a 1767-amino-acid chain: E3 ubiquitin-protein ligase listerin (1767 aa).

HEAT repeat units lie at residues 59–96 (SLVD…ERDT), 100–138 (KGVL…KVKK), 273–314 (SAYF…VVCP), 335–372 (NAKK…KLPQ), 380–418 (DFFK…CLRF), 433–473 (LINE…KADA), and 509–547 (VKSV…NIPE). The segment at 550 to 583 (KGDEKSMSSEGENSEGSDGGAQSPLSNTSSDLVS) is disordered. The span at 572 to 581 (SPLSNTSSDL) shows a compositional bias: polar residues. HEAT repeat units follow at residues 621–658 (LDSF…KNPA), 676–714 (EDGG…KWSS), 1067–1104 (SETS…SSDE), 1183–1226 (QLLH…IMRF), 1315–1353 (GIHS…TLTY), 1378–1415 (EHLQ…ELPQ), and 1476–1513 (LGYL…LNKL). Residues 1716–1763 (CMICFSVIHGFNYSLPKKACRTCKKKFHSACLYKWFTSSNKSTCPLCR) form an RING-type zinc finger.

The protein belongs to the LTN1 family. In terms of assembly, component of the ribosome quality control complex (RQC), composed of at least the E3 ubiquitin ligase LTN1 and NEMF associated with the 60S ribosomal subunit. The complex probably also contains TCF25 as well as VCP/p97 and its ubiquitin-binding cofactors. Post-translationally, autoubiquitinated. Widely expressed, including in the brain and spinal cord.

It localises to the cytoplasm. Its subcellular location is the cytosol. The catalysed reaction is S-ubiquitinyl-[E2 ubiquitin-conjugating enzyme]-L-cysteine + [acceptor protein]-L-lysine = [E2 ubiquitin-conjugating enzyme]-L-cysteine + N(6)-ubiquitinyl-[acceptor protein]-L-lysine.. It participates in protein modification; protein ubiquitination. In terms of biological role, E3 ubiquitin-protein ligase. component of the ribosome quality control complex (RQC), a ribosome-associated complex that mediates ubiquitination and extraction of incompletely synthesized nascent chains for proteasomal degradation. Within the RQC complex, LTN1 is recruited to stalled 60S ribosomal subunits by NEMF and mediates ubiquitination of stalled nascent chains. Ubiquitination leads to VCP/p97 recruitment for extraction and degradation of the incomplete translation product. The sequence is that of E3 ubiquitin-protein ligase listerin (Ltn1) from Mus musculus (Mouse).